The following is a 465-amino-acid chain: Cysteine--tRNA ligase (465 aa).

Cysteine 29 contributes to the Zn(2+) binding site. Positions 31–41 (PTVYNYIHIGN) match the 'HIGH' region motif. Residues cysteine 209, histidine 234, and glutamate 238 each contribute to the Zn(2+) site. Positions 266-270 (KMSKS) match the 'KMSKS' region motif. An ATP-binding site is contributed by lysine 269. Serine 270 bears the Phosphoserine mark.

This sequence belongs to the class-I aminoacyl-tRNA synthetase family. In terms of assembly, monomer. Requires Zn(2+) as cofactor.

Its subcellular location is the cytoplasm. The enzyme catalyses tRNA(Cys) + L-cysteine + ATP = L-cysteinyl-tRNA(Cys) + AMP + diphosphate. In Anoxybacillus flavithermus (strain DSM 21510 / WK1), this protein is Cysteine--tRNA ligase.